The primary structure comprises 470 residues: Cell division protein FtsP (470 aa).

The segment at residues 1–27 (MSLSRRQFIQASGIALCAGAVPLKASA) is a signal peptide (tat-type signal). The region spanning 229-287 (VRLRLLNASNSRRYQLQMSDGRPLHVISGDQGFLPAPVSVKQLSLAPGERREILVDMSN) is the Plastocyanin-like domain.

This sequence belongs to the FtsP family. Post-translationally, predicted to be exported by the Tat system. The position of the signal peptide cleavage has not been experimentally proven.

The protein localises to the periplasm. In terms of biological role, cell division protein that is required for growth during stress conditions. May be involved in protecting or stabilizing the divisomal assembly under conditions of stress. The protein is Cell division protein FtsP of Shigella dysenteriae serotype 1 (strain Sd197).